A 440-amino-acid polypeptide reads, in one-letter code: Enolase (440 aa).

Gln-163 contacts (2R)-2-phosphoglycerate. The active-site Proton donor is the Glu-205. Positions 242, 288, and 315 each coordinate Mg(2+). (2R)-2-phosphoglycerate contacts are provided by Lys-340, Arg-369, Ser-370, and Lys-391. Lys-340 functions as the Proton acceptor in the catalytic mechanism.

The protein belongs to the enolase family. It depends on Mg(2+) as a cofactor.

The protein localises to the cytoplasm. It is found in the secreted. It localises to the cell surface. The enzyme catalyses (2R)-2-phosphoglycerate = phosphoenolpyruvate + H2O. It functions in the pathway carbohydrate degradation; glycolysis; pyruvate from D-glyceraldehyde 3-phosphate: step 4/5. Catalyzes the reversible conversion of 2-phosphoglycerate (2-PG) into phosphoenolpyruvate (PEP). It is essential for the degradation of carbohydrates via glycolysis. The protein is Enolase of Limosilactobacillus fermentum (strain NBRC 3956 / LMG 18251) (Lactobacillus fermentum).